The sequence spans 68 residues: Antimicrobial peptide UyCT3 (68 aa).

A signal peptide spans 1–23 (MKNQFVLLLLAIVFLQMIFQSDA). Phenylalanine 36 bears the Phenylalanine amide mark. A propeptide spanning residues 40 to 68 (GLENMDKFDELFDGDLSEADLDFLKELMR) is cleaved from the precursor.

Belongs to the non-disulfide-bridged peptide (NDBP) superfamily. Short antimicrobial peptide (group 4) family. The non-amidated UyCT3 does not show antimicrobial activity. As to expression, expressed by the venom gland.

Its subcellular location is the secreted. The protein resides in the target cell membrane. Antimicrobial peptide that inhibits the growth of Gram-positive (S.aureus, MIC=10 uM) and Gram-negative bacteria (E.coli, MIC=15 uM and P.aeruginosa, MIC=6 uM). It also shows 35% of hemolysis when 15 uM are tested (95% at 50 uM). The protein is Antimicrobial peptide UyCT3 of Urodacus yaschenkoi (Inland robust scorpion).